The primary structure comprises 702 residues: Polyribonucleotide nucleotidyltransferase (702 aa).

Mg(2+) is bound by residues aspartate 493 and aspartate 499. In terms of domain architecture, KH spans 559-619; that stretch reads PKVEIFNVDP…NLISQSKEYI (61 aa). Residues 643-702 enclose the S1 motif domain; it reads GEEFLGRVQKVVEFGVFVELKEGVDGLLHNSKIKEKLEVGHEIKVKVAEIKNGKVSLDLA.

Belongs to the polyribonucleotide nucleotidyltransferase family. The cofactor is Mg(2+).

It is found in the cytoplasm. The catalysed reaction is RNA(n+1) + phosphate = RNA(n) + a ribonucleoside 5'-diphosphate. In terms of biological role, involved in mRNA degradation. Catalyzes the phosphorolysis of single-stranded polyribonucleotides processively in the 3'- to 5'-direction. This chain is Polyribonucleotide nucleotidyltransferase, found in Campylobacter lari (strain RM2100 / D67 / ATCC BAA-1060).